Here is a 314-residue protein sequence, read N- to C-terminus: MKQALLCMSHSPLLHHLDPPADVKASVEAAFDQARAFVHNFDPDVIVNFGPDHYNGFFYDLMPPFCIGYKAKGSGDYDSFAGELNVPEAMAEDLAQFVMDQGLDIAISRQMEVDHGAVQPMEIIYGDVASKPLIPVFVNSVARPFVKVARVRKFGEAVGAYFKNSDKKVLFIGSGGLSHDPPVPQIATADEAQRKMLTDGRNPTPQARAARQQRVIDTAVKFAADEADIMDLNPEWDRGFLDVCASGRIEDFDRYTADDMDAVAGHSSHEVRNWVAAYSALRACGEYEIAYEFYRPIKEYISGFAVTTAILRDI.

The active-site Proton donor is histidine 115. Residue histidine 179 is the Proton acceptor of the active site.

Belongs to the LigB/MhpB extradiol dioxygenase family. In terms of assembly, homotetramer. Requires Fe(2+) as cofactor.

It carries out the reaction 3-(2,3-dihydroxyphenyl)propanoate + O2 = (2Z,4E)-2-hydroxy-6-oxonona-2,4-dienedioate + H(+). The catalysed reaction is (2E)-3-(2,3-dihydroxyphenyl)prop-2-enoate + O2 = (2Z,4E,7E)-2-hydroxy-6-oxonona-2,4,7-trienedioate + H(+). It participates in aromatic compound metabolism; 3-phenylpropanoate degradation. Functionally, catalyzes the non-heme iron(II)-dependent oxidative cleavage of 2,3-dihydroxyphenylpropionic acid and 2,3-dihydroxicinnamic acid into 2-hydroxy-6-ketononadienedioate and 2-hydroxy-6-ketononatrienedioate, respectively. The protein is 2,3-dihydroxyphenylpropionate/2,3-dihydroxicinnamic acid 1,2-dioxygenase of Rhodococcus globerulus.